The primary structure comprises 422 residues: GTPase Obg (422 aa).

An Obg domain is found at 2 to 157 (AKFIDEIKLT…YLAHIVLKVM (156 aa)). An OBG-type G domain is found at 158-325 (SDVGIIGKPS…LKGKIWKILE (168 aa)). GTP-binding positions include 164 to 171 (GKPSAGKS), 189 to 193 (FTTLV), 210 to 213 (DLPG), 279 to 282 (NKSD), and 306 to 308 (SAI). Mg(2+)-binding residues include Ser-171 and Thr-191. An OCT domain is found at 334–420 (EEEETEENVE…ILDYEFEWDG (87 aa)).

This sequence belongs to the TRAFAC class OBG-HflX-like GTPase superfamily. OBG GTPase family. Monomer. It depends on Mg(2+) as a cofactor.

Its subcellular location is the cytoplasm. In terms of biological role, an essential GTPase which binds GTP, GDP and possibly (p)ppGpp with moderate affinity, with high nucleotide exchange rates and a fairly low GTP hydrolysis rate. Plays a role in control of the cell cycle, stress response, ribosome biogenesis and in those bacteria that undergo differentiation, in morphogenesis control. The protein is GTPase Obg of Mycoplasmopsis agalactiae (strain NCTC 10123 / CIP 59.7 / PG2) (Mycoplasma agalactiae).